The primary structure comprises 191 residues: Protein GrpE (191 aa).

It belongs to the GrpE family. As to quaternary structure, homodimer.

The protein resides in the cytoplasm. In terms of biological role, participates actively in the response to hyperosmotic and heat shock by preventing the aggregation of stress-denatured proteins, in association with DnaK and GrpE. It is the nucleotide exchange factor for DnaK and may function as a thermosensor. Unfolded proteins bind initially to DnaJ; upon interaction with the DnaJ-bound protein, DnaK hydrolyzes its bound ATP, resulting in the formation of a stable complex. GrpE releases ADP from DnaK; ATP binding to DnaK triggers the release of the substrate protein, thus completing the reaction cycle. Several rounds of ATP-dependent interactions between DnaJ, DnaK and GrpE are required for fully efficient folding. This Listeria monocytogenes serotype 4a (strain HCC23) protein is Protein GrpE.